Consider the following 235-residue polypeptide: Isoprenyl transferase (235 aa).

Residue Asp21 is part of the active site. Asp21 is a binding site for Mg(2+). Residues 22 to 25 (GNAR), Trp26, Lys34, His38, and 66 to 68 (SSE) contribute to the substrate site. The active-site Proton acceptor is Asn69. Residues Trp70, Arg72, Arg183, and 189-191 (RIS) each bind substrate. Glu202 contributes to the Mg(2+) binding site.

This sequence belongs to the UPP synthase family. In terms of assembly, homodimer. The cofactor is Mg(2+).

In terms of biological role, catalyzes the condensation of isopentenyl diphosphate (IPP) with allylic pyrophosphates generating different type of terpenoids. This chain is Isoprenyl transferase, found in Rickettsia felis (strain ATCC VR-1525 / URRWXCal2) (Rickettsia azadi).